A 240-amino-acid polypeptide reads, in one-letter code: Probable transcriptional regulatory protein HPP12_0160 (240 aa).

This sequence belongs to the TACO1 family.

The protein localises to the cytoplasm. The polypeptide is Probable transcriptional regulatory protein HPP12_0160 (Helicobacter pylori (strain P12)).